The chain runs to 323 residues: D-specific alpha-keto acid dehydrogenase (323 aa).

NAD(+)-binding positions include 157–158 (HI), 230–232 (TGR), and aspartate 256. The active site involves arginine 232. Glutamate 261 is a catalytic residue. The Proton donor role is filled by histidine 293. 293 to 296 (HTAY) is a binding site for NAD(+).

This sequence belongs to the D-isomer specific 2-hydroxyacid dehydrogenase family.

Its function is as follows. Required for high-level resistance to glycopeptides antibiotics. Catalyzes the reduction of 2-keto acids to 2-D-hydroxy acids that give rise to peptidoglycan precursors that terminate in the depsipeptide D-alanine-2-lactate rather than the dipeptide D-alanine-D-alanine thus preventing vancomycin binding. The chain is D-specific alpha-keto acid dehydrogenase (vanHB) from Enterococcus faecalis (strain ATCC 700802 / V583).